A 430-amino-acid chain; its full sequence is NADH-quinone oxidoreductase subunit D 1 (430 aa).

The disordered stretch occupies residues 1 to 36 (MSEAKGVGGIDPRATPGSAGAGERPPMGTVSRAGDG).

Belongs to the complex I 49 kDa subunit family. As to quaternary structure, NDH-1 is composed of 14 different subunits. Subunits NuoB, C, D, E, F, and G constitute the peripheral sector of the complex.

It localises to the cell inner membrane. It catalyses the reaction a quinone + NADH + 5 H(+)(in) = a quinol + NAD(+) + 4 H(+)(out). Its function is as follows. NDH-1 shuttles electrons from NADH, via FMN and iron-sulfur (Fe-S) centers, to quinones in the respiratory chain. The immediate electron acceptor for the enzyme in this species is believed to be ubiquinone. Couples the redox reaction to proton translocation (for every two electrons transferred, four hydrogen ions are translocated across the cytoplasmic membrane), and thus conserves the redox energy in a proton gradient. The sequence is that of NADH-quinone oxidoreductase subunit D 1 from Anaeromyxobacter dehalogenans (strain 2CP-C).